Reading from the N-terminus, the 199-residue chain is Superoxide dismutase [Fe] (199 aa).

Positions 27, 79, 161, and 165 each coordinate Fe cation.

This sequence belongs to the iron/manganese superoxide dismutase family. In terms of assembly, homodimer. It depends on Fe cation as a cofactor.

It catalyses the reaction 2 superoxide + 2 H(+) = H2O2 + O2. In terms of biological role, destroys superoxide anion radicals which are normally produced within the cells and which are toxic to biological systems. In Synechocystis sp. (strain ATCC 27184 / PCC 6803 / Kazusa), this protein is Superoxide dismutase [Fe] (sodB).